The sequence spans 412 residues: G-protein coupled receptor homolog UL33 (412 aa).

Residues methionine 1–glutamate 35 lie on the Virion surface side of the membrane. Residues asparagine 7, asparagine 19, and asparagine 23 are each glycosylated (N-linked (GlcNAc...) asparagine; by host). A helical transmembrane segment spans residues alanine 36–threonine 56. Topologically, residues glutamine 57 to asparagine 80 are intravirion. Residues phenylalanine 81–serine 101 traverse the membrane as a helical segment. Residues valine 102–lysine 106 lie on the Virion surface side of the membrane. Cysteine 105 and cysteine 188 form a disulfide bridge. A helical membrane pass occupies residues phenylalanine 107–alanine 127. The Intravirion segment spans residues alanine 128 to threonine 147. The chain crosses the membrane as a helical span at residues tyrosine 148–tyrosine 168. At threonine 169–valine 206 the chain is on the virion surface side. The helical transmembrane segment at leucine 207–phenylalanine 227 threads the bilayer. Over tyrosine 228 to threonine 244 the chain is Intravirion. A helical transmembrane segment spans residues phenylalanine 245–isoleucine 265. The Virion surface segment spans residues phenylalanine 266–arginine 292. A helical transmembrane segment spans residues leucine 293 to phenylalanine 313. At leucine 314–valine 412 the chain is on the intravirion side. Residues asparagine 377–valine 412 are disordered. Polar residues predominate over residues lysine 388–lysine 397.

It belongs to the G-protein coupled receptor 1 family. As to quaternary structure, heterodimerizes with US28.

It localises to the virion. Its subcellular location is the host cell membrane. The protein resides in the host cytoplasm. G-protein-coupled receptor (vGPCR) that constitutively activates multiple oncogenic signaling pathways including STAT3, AP-1, phospholipase C, NF-kappa-B or cAMP-responsive element (CRE) pathways. Plays an important role in viral reactivation from latency through activation of host CREB1, facilitating its recruitment to the viral major immediate early (MIE) genes. In turn, expression of the MIE-driven genes such as UL123 are de-repressed. Also facilitates virus dissemination via the extracellular and cell-to-cell route. The sequence is that of G-protein coupled receptor homolog UL33 (UL33) from Human cytomegalovirus (strain Merlin) (HHV-5).